A 476-amino-acid polypeptide reads, in one-letter code: 3-isopropylmalate dehydratase large subunit (476 aa).

Positions 357, 417, and 420 each coordinate [4Fe-4S] cluster.

This sequence belongs to the aconitase/IPM isomerase family. LeuC type 1 subfamily. As to quaternary structure, heterodimer of LeuC and LeuD. [4Fe-4S] cluster serves as cofactor.

The catalysed reaction is (2R,3S)-3-isopropylmalate = (2S)-2-isopropylmalate. The protein operates within amino-acid biosynthesis; L-leucine biosynthesis; L-leucine from 3-methyl-2-oxobutanoate: step 2/4. Catalyzes the isomerization between 2-isopropylmalate and 3-isopropylmalate, via the formation of 2-isopropylmaleate. In Mycobacterium avium (strain 104), this protein is 3-isopropylmalate dehydratase large subunit.